A 194-amino-acid polypeptide reads, in one-letter code: Peptidyl-tRNA hydrolase (194 aa).

A tRNA-binding site is contributed by Tyr16. His21 serves as the catalytic Proton acceptor. Positions 67, 69, and 115 each coordinate tRNA.

This sequence belongs to the PTH family. Monomer.

It is found in the cytoplasm. It catalyses the reaction an N-acyl-L-alpha-aminoacyl-tRNA + H2O = an N-acyl-L-amino acid + a tRNA + H(+). In terms of biological role, hydrolyzes ribosome-free peptidyl-tRNAs (with 1 or more amino acids incorporated), which drop off the ribosome during protein synthesis, or as a result of ribosome stalling. Functionally, catalyzes the release of premature peptidyl moieties from peptidyl-tRNA molecules trapped in stalled 50S ribosomal subunits, and thus maintains levels of free tRNAs and 50S ribosomes. The protein is Peptidyl-tRNA hydrolase of Salmonella dublin (strain CT_02021853).